The primary structure comprises 602 residues: Elongation factor 4 (602 aa).

One can recognise a tr-type G domain in the interval 8–190 (DLIRNFSIVA…AIVHRLPPPK (183 aa)). GTP-binding positions include 20-25 (DHGKST) and 137-140 (NKID).

The protein belongs to the TRAFAC class translation factor GTPase superfamily. Classic translation factor GTPase family. LepA subfamily.

It is found in the cell inner membrane. The enzyme catalyses GTP + H2O = GDP + phosphate + H(+). Its function is as follows. Required for accurate and efficient protein synthesis under certain stress conditions. May act as a fidelity factor of the translation reaction, by catalyzing a one-codon backward translocation of tRNAs on improperly translocated ribosomes. Back-translocation proceeds from a post-translocation (POST) complex to a pre-translocation (PRE) complex, thus giving elongation factor G a second chance to translocate the tRNAs correctly. Binds to ribosomes in a GTP-dependent manner. In Cereibacter sphaeroides (strain ATCC 17029 / ATH 2.4.9) (Rhodobacter sphaeroides), this protein is Elongation factor 4.